Consider the following 404-residue polypeptide: Multidrug resistance protein MdtG (404 aa).

Helical transmembrane passes span 19–39, 56–76, 90–110, 113–133, 144–164, 171–191, 222–242, 254–274, 288–308, 317–337, and 376–396; these read LGCF…PLYV, LVFS…GGLA, LGMA…QFLI, ALLG…ATQV, TLST…GLLA, PVFF…FFFI, LFVT…ILTL, IAFI…LSAP, ILIV…FVQT, FLLG…LVYN, and AVFC…WNSL.

The protein belongs to the major facilitator superfamily. DHA1 family. MdtG (TC 2.A.1.2.20) subfamily.

Its subcellular location is the cell inner membrane. The chain is Multidrug resistance protein MdtG from Salmonella schwarzengrund (strain CVM19633).